The chain runs to 131 residues: Holo-[acyl-carrier-protein] synthase (131 aa).

Positions 8 and 57 each coordinate Mg(2+).

Belongs to the P-Pant transferase superfamily. AcpS family. Mg(2+) is required as a cofactor.

Its subcellular location is the cytoplasm. The catalysed reaction is apo-[ACP] + CoA = holo-[ACP] + adenosine 3',5'-bisphosphate + H(+). Functionally, transfers the 4'-phosphopantetheine moiety from coenzyme A to a Ser of acyl-carrier-protein. This chain is Holo-[acyl-carrier-protein] synthase, found in Desulforudis audaxviator (strain MP104C).